We begin with the raw amino-acid sequence, 163 residues long: Lipoprotein signal peptidase (163 aa).

The next 3 helical transmembrane spans lie at 3–23, 70–90, and 94–114; these read IPLI…IIIL, NYIL…TMYN, and IENF…IGNF. Catalysis depends on residues aspartate 125 and aspartate 143. Residues 134 to 154 form a helical membrane-spanning segment; that stretch reads WHFATFNIADVSIFIGSVLFI.

Belongs to the peptidase A8 family.

It is found in the cell membrane. It carries out the reaction Release of signal peptides from bacterial membrane prolipoproteins. Hydrolyzes -Xaa-Yaa-Zaa-|-(S,diacylglyceryl)Cys-, in which Xaa is hydrophobic (preferably Leu), and Yaa (Ala or Ser) and Zaa (Gly or Ala) have small, neutral side chains.. It participates in protein modification; lipoprotein biosynthesis (signal peptide cleavage). Functionally, this protein specifically catalyzes the removal of signal peptides from prolipoproteins. The sequence is that of Lipoprotein signal peptidase from Buchnera aphidicola subsp. Baizongia pistaciae (strain Bp).